The sequence spans 576 residues: MAGUK p55 subfamily member 7 (576 aa).

L27 domains lie at 10-64 (CDMG…EKQN) and 65-122 (PLPI…YDPV). A PDZ domain is found at 139-220 (IIRLVKNSEP…AITFKIIPST (82 aa)). The region spanning 228–298 (EGKIFIKALF…PSKHFQERRL (71 aa)) is the SH3 domain. The tract at residues 289–383 (PSKHFQERRL…VGPVGVGLNE (95 aa)) is phospho-regulated basic and hydrophobic (PRBH) motif. Residues 368–560 (YRLIVLVGPV…AFNELKTTFD (193 aa)) form the Guanylate kinase-like domain. At Ser409 the chain carries Phosphoserine.

Belongs to the MAGUK family. As to quaternary structure, heterodimer; able to heterodimerize via its C-terminal L27 domain with LIN7A, LIN7B and LIN7C. Forms a tripartite complex composed of DLG1, MPP7 and LIN7 (LIN7A or LIN7C). Interacts with DLG1 via its N-terminal L27 domain. Interacts with PALS1 and PATJ. In terms of processing, phosphorylated by aPKC which promotes dissociation from the cell cortex.

It is found in the membrane. The protein resides in the lateral cell membrane. The protein localises to the cell junction. Its subcellular location is the tight junction. It localises to the adherens junction. It is found in the cytoplasm. The protein resides in the cell cortex. Its function is as follows. Acts as an important adapter that promotes epithelial cell polarity and tight junction formation via its interaction with DLG1. Involved in the assembly of protein complexes at sites of cell-cell contact. In Mus musculus (Mouse), this protein is MAGUK p55 subfamily member 7 (Mpp7).